The primary structure comprises 388 residues: Phosphoglycerate kinase (388 aa).

Substrate is bound by residues Asp24 to Asn26, Arg37, Arg56 to Arg59, Arg117, and Arg165. Positions Asn26–Arg136 are disordered. Residues Glu34 to Gly55 show a composition bias toward basic and acidic residues. Residues Gly102–Arg136 show a composition bias toward basic residues. ATP contacts are provided by residues Lys215, Gly303, Glu334, and Gly363–Ser366.

Belongs to the phosphoglycerate kinase family. In terms of assembly, monomer.

It is found in the cytoplasm. The catalysed reaction is (2R)-3-phosphoglycerate + ATP = (2R)-3-phospho-glyceroyl phosphate + ADP. Its pathway is carbohydrate degradation; glycolysis; pyruvate from D-glyceraldehyde 3-phosphate: step 2/5. The polypeptide is Phosphoglycerate kinase (pgk) (Mycobacterium avium).